The sequence spans 161 residues: Nucleotide-binding protein PputGB1_4497 (161 aa).

This sequence belongs to the YajQ family.

In terms of biological role, nucleotide-binding protein. In Pseudomonas putida (strain GB-1), this protein is Nucleotide-binding protein PputGB1_4497.